The sequence spans 713 residues: Serine/threonine-protein kinase SSN3 (713 aa).

A Protein kinase domain is found at 66–484; that stretch reads YTILGFLSSG…ANQALEHAWF (419 aa). 72 to 80 contacts ATP; the sequence is LSSGTYGRV. Residues 104 to 120 show a composition bias toward low complexity; the sequence is NAGTGSGTATVGSGAST. A disordered region spans residues 104-188; sequence NAGTGSGTAT…GGSDNTLQLS (85 aa). Over residues 129–142 the composition is skewed to polar residues; that stretch reads QQHQLLDSPSSSLH. Residues 158 to 175 are compositionally biased toward low complexity; sequence GTPSASPSLSASLGTSTA. Lysine 201 serves as a coordination point for ATP. Aspartate 304 serves as the catalytic Proton acceptor. The segment covering 657-672 has biased composition (polar residues); that stretch reads SNPATVRSSHSIGSTE. The tract at residues 657–713 is disordered; that stretch reads SNPATVRSSHSIGSTESITPTTSSQPIPAQPSSAPLARTTNLVATATRNQQRKRQRN. The span at 673–691 shows a compositional bias: low complexity; it reads SITPTTSSQPIPAQPSSAP. A compositionally biased stretch (polar residues) spans 694–705; the sequence is RTTNLVATATRN.

It belongs to the protein kinase superfamily. CMGC Ser/Thr protein kinase family. CDC2/CDKX subfamily. In terms of assembly, component of the srb8-11 complex, a regulatory module of the Mediator complex. The cofactor is Mg(2+).

It is found in the nucleus. It catalyses the reaction L-seryl-[protein] + ATP = O-phospho-L-seryl-[protein] + ADP + H(+). The enzyme catalyses L-threonyl-[protein] + ATP = O-phospho-L-threonyl-[protein] + ADP + H(+). The catalysed reaction is [DNA-directed RNA polymerase] + ATP = phospho-[DNA-directed RNA polymerase] + ADP + H(+). In terms of biological role, component of the srb8-11 complex. The srb8-11 complex is a regulatory module of the Mediator complex which is itself dependent transcription. The srb8-11 complex may be involved in the transcriptional repression of a subset of genes regulated by Mediator. It may inhibit the association of the Mediator complex with RNA polymerase II to form the holoenzyme complex. The srb8-11 complex phosphorylates the C-terminal domain (CTD) of the largest subunit of RNA polymerase II. The sequence is that of Serine/threonine-protein kinase SSN3 (SSN3) from Mycosarcoma maydis (Corn smut fungus).